The primary structure comprises 351 residues: MTNSIRIGTRKSPLALIHTNLVIQQIKQFFPDINCEIVPIITSGDLIQNKPLYDIGGKALFLKEIEQALLDKKIDLAVHSLKDVPGRIPEPLVIAAVLEREDPRDVFVCLKYKSIEELPQNAVIGSSAVRRKAFIQKIRPDLKVTVFRGNVDSRIKKLMTGEVDATILAYTGLKRLEVFNPEYCHLIEYSQMLPCIGQGVIAVEIRKDDNAMLEICNQINHLPTFELIKPERAFLEYLDANCRTPIAAYSQYLDANPRHLSKLAYREVFEGNTEALATAAYKSNRTDVSTGLTYKLPLEVEFGKVSNIQTNFMLGNLDGSKITFHTETTNIKTSTEAGIKAAKMMLEAICK.

Cys-242 is modified (S-(dipyrrolylmethanemethyl)cysteine).

Belongs to the HMBS family. Monomer. Dipyrromethane serves as cofactor.

The enzyme catalyses 4 porphobilinogen + H2O = hydroxymethylbilane + 4 NH4(+). It functions in the pathway porphyrin-containing compound metabolism; protoporphyrin-IX biosynthesis; coproporphyrinogen-III from 5-aminolevulinate: step 2/4. Tetrapolymerization of the monopyrrole PBG into the hydroxymethylbilane pre-uroporphyrinogen in several discrete steps. The sequence is that of Porphobilinogen deaminase from Rickettsia africae (strain ESF-5).